We begin with the raw amino-acid sequence, 346 residues long: Phosphate acyltransferase (346 aa).

Belongs to the PlsX family. As to quaternary structure, homodimer. Probably interacts with PlsY.

Its subcellular location is the cytoplasm. It catalyses the reaction a fatty acyl-[ACP] + phosphate = an acyl phosphate + holo-[ACP]. It functions in the pathway lipid metabolism; phospholipid metabolism. Its function is as follows. Catalyzes the reversible formation of acyl-phosphate (acyl-PO(4)) from acyl-[acyl-carrier-protein] (acyl-ACP). This enzyme utilizes acyl-ACP as fatty acyl donor, but not acyl-CoA. In Geotalea daltonii (strain DSM 22248 / JCM 15807 / FRC-32) (Geobacter daltonii), this protein is Phosphate acyltransferase.